The sequence spans 100 residues: Large ribosomal subunit protein uL23 (100 aa).

Belongs to the universal ribosomal protein uL23 family. As to quaternary structure, part of the 50S ribosomal subunit. Contacts protein L29, and trigger factor when it is bound to the ribosome.

Functionally, one of the early assembly proteins it binds 23S rRNA. One of the proteins that surrounds the polypeptide exit tunnel on the outside of the ribosome. Forms the main docking site for trigger factor binding to the ribosome. The sequence is that of Large ribosomal subunit protein uL23 from Proteus mirabilis (strain HI4320).